The primary structure comprises 55 residues: Large ribosomal subunit protein uL30 (55 aa).

The protein belongs to the universal ribosomal protein uL30 family. Part of the 50S ribosomal subunit.

Functionally, binds the 5S and 23S rRNAs. The polypeptide is Large ribosomal subunit protein uL30 (Deinococcus radiodurans (strain ATCC 13939 / DSM 20539 / JCM 16871 / CCUG 27074 / LMG 4051 / NBRC 15346 / NCIMB 9279 / VKM B-1422 / R1)).